We begin with the raw amino-acid sequence, 280 residues long: Inner kinetochore subunit fta1 (280 aa).

This sequence belongs to the CENP-L/IML3 family. Component of the inner kinetochore constitutive centromere-associated network (CCAN) (also known as central kinetochore Sim4 complex in fission yeast), which is composed of at least cnl2, cnp3, cnp20, fta1, fta2, fta3, fta4, fta6, fta7, mal2, mhf1, mhf2, mis6, mis15, mis17, sim4 and wip1.

The protein localises to the nucleus. It localises to the chromosome. Its subcellular location is the centromere. The protein resides in the kinetochore. Component of the kinetochore, a multiprotein complex that assembles on centromeric DNA and attaches chromosomes to spindle microtubules, mediating chromosome segregation and sister chromatid segregation during meiosis and mitosis. Component of the inner kinetochore constitutive centromere-associated network (CCAN), which serves as a structural platform for outer kinetochore assembly. The chain is Inner kinetochore subunit fta1 (fta1) from Schizosaccharomyces pombe (strain 972 / ATCC 24843) (Fission yeast).